A 171-amino-acid polypeptide reads, in one-letter code: Cytochrome c-type biogenesis protein CcmE (171 aa).

The Cytoplasmic portion of the chain corresponds to 1–7 (MNRKQKR). A helical; Signal-anchor for type II membrane protein membrane pass occupies residues 8–28 (LAVIAGGMGFIAAAVLLVMFA). The Periplasmic portion of the chain corresponds to 29 to 171 (FSQSVAYFYM…NPGEEAKATQ (143 aa)). The heme site is built by His124 and Tyr128. The tract at residues 132–171 (DVADRLKQQGLWKEGQGGQESPGKEGQGQENPGEEAKATQ) is disordered.

It belongs to the CcmE/CycJ family.

The protein localises to the cell inner membrane. Heme chaperone required for the biogenesis of c-type cytochromes. Transiently binds heme delivered by CcmC and transfers the heme to apo-cytochromes in a process facilitated by CcmF and CcmH. This Rhizobium leguminosarum bv. trifolii (strain WSM2304) protein is Cytochrome c-type biogenesis protein CcmE.